The primary structure comprises 215 residues: Protein FAM27D1 (215 aa).

Positions 74-172 (QPKTHTHTGM…RGTQADLSSR (99 aa)) are disordered. A compositionally biased stretch (basic and acidic residues) spans 87-108 (THRERERNTQRLRDRERRENGR). The span at 109-122 (HTHRHTHTLTHTHT) shows a compositional bias: basic residues. 2 stretches are compositionally biased toward basic and acidic residues: residues 123 to 139 (HRDT…ETHT) and 149 to 162 (SAHD…REQP). Positions 163–172 (RGTQADLSSR) are enriched in polar residues.

This sequence belongs to the FAM27 family.

This Homo sapiens (Human) protein is Protein FAM27D1 (FAM27D1).